Here is a 430-residue protein sequence, read N- to C-terminus: Acylsugar acyltransferase 3 (430 aa).

Catalysis depends on proton acceptor residues His155 and Asp367.

Belongs to the plant acyltransferase family. Monomer. As to expression, expressed in tip cells of type I trichomes of stems and petioles, sites of acylsugars production.

Its function is as follows. Catalyzes the transfer of short (four to five carbons) branched acyl chains to the furanose ring of di-acylsucrose acceptors to produce tri-acylsucroses such as S3:15 (5,5,5), S4:17 (2,5,5,5) and S4:24 (2,5,5,12) acylsucroses. The chain is Acylsugar acyltransferase 3 from Solanum lycopersicum (Tomato).